A 202-amino-acid polypeptide reads, in one-letter code: MGGKWSKSSVVGWPAVRERMRRAEPAADGVGAVSRDLEKHGAITSSNTAATNADCAWLEAQEEEEVGFPVTPQVPLRPMTYKAAVDLSHFLKEKGGLEGLIHSQRRQDILDLWIYHTQGYFPDWQNYTPEPGVRYPLTFGWCYKLVPVEPDKVEEANKGENTRLLHPVSLHGMDDPEREVLEWRFDSRLAFHHVARELHPEY.

Gly-2 carries N-myristoyl glycine; by host lipidation. Ser-6 carries the post-translational modification Phosphoserine; by host. The acidic; interacts with host PACS1 and PACS2; stabilizes the interaction of NEF/MHC-I with host AP1M1; necessary for MHC-I internalization stretch occupies residues 62 to 65; the sequence is EEEE. The tract at residues 69-78 is SH3-binding; interaction with Src family tyrosine kinases; it reads PVTPQVPLRP. The short motif at 72-75 is the PxxP; stabilizes the interaction of NEF/MHC-I with host AP1M1; necessary for MHC-I internalization element; it reads PQVP. A mediates dimerization, Nef-PTE1 interaction region spans residues 108-124; it reads DILDLWIYHTQGYFPDW. The interval 148–180 is binding to ATP6V1H; the sequence is VEPDKVEEANKGENTRLLHPVSLHGMDDPEREV. Positions 164–165 match the Dileucine internalization motif; necessary for CD4 internalization motif; it reads LL. The Diacidic; necessary for CD4 internalization signature appears at 174 to 175; that stretch reads DD.

This sequence belongs to the lentivirus primate group Nef protein family. In terms of assembly, monomer; cytosolic form. Homodimer; membrane bound form. Interacts with Nef associated p21-activated kinase (PAK2); this interaction activates PAK2. Associates with the Nef-MHC-I-AP1 complex; this complex is required for MHC-I internalization. Interacts (via C-terminus) with host PI3-kinase. Interacts with host PACS1; this interaction seems to be weak. Interacts with host PACS2. Interacts with host LCK and MAPK3; these interactions inhibit the kinase activity of the latter. Interacts with host ATP6V1H; this interaction may play a role in CD4 endocytosis. Associates with the CD4-Nef-AP2 complex; this complex is required for CD4 internalization. Interacts with host AP2 subunit alpha and AP2 subunit sigma2. Interacts with TCR-zeta chain; this interaction up-regulates the Fas ligand (FasL) surface expression. Interacts with host HCK, LYN, and SRC; these interactions activate the Src family kinases. Interacts with MAP3K5; this interaction inhibits the Fas and TNFR-mediated death signals. Interacts with beta-COP and PTE1. Interacts with human RACK1; this increases Nef phosphorylation by PKC. Interacts with TP53; this interaction decreases the half-life of TP53, protecting the infected cell against p53-mediated apoptosis. Post-translationally, the virion-associated Nef proteins are cleaved by the viral protease to release the soluble C-terminal core protein. Nef is probably cleaved concomitantly with viral structural proteins on maturation of virus particles. In terms of processing, myristoylated. Phosphorylated on serine residues, probably by host PKCdelta and theta.

The protein resides in the host cell membrane. It is found in the virion. Its subcellular location is the secreted. The protein localises to the host Golgi apparatus membrane. Its function is as follows. Factor of infectivity and pathogenicity, required for optimal virus replication. Alters numerous pathways of T-lymphocyte function and down-regulates immunity surface molecules in order to evade host defense and increase viral infectivity. Alters the functionality of other immunity cells, like dendritic cells, monocytes/macrophages and NK cells. In infected CD4(+) T-lymphocytes, down-regulates the surface MHC-I, mature MHC-II, CD4, CD28, CCR5 and CXCR4 molecules. Mediates internalization and degradation of host CD4 through the interaction of with the cytoplasmic tail of CD4, the recruitment of AP-2 (clathrin adapter protein complex 2), internalization through clathrin coated pits, and subsequent transport to endosomes and lysosomes for degradation. Diverts host MHC-I molecules to the trans-Golgi network-associated endosomal compartments by an endocytic pathway to finally target them for degradation. MHC-I down-regulation may involve AP-1 (clathrin adapter protein complex 1) or possibly Src family kinase-ZAP70/Syk-PI3K cascade recruited by PACS2. In consequence infected cells are masked for immune recognition by cytotoxic T-lymphocytes. Decreasing the number of immune receptors also prevents reinfection by more HIV particles (superinfection). Down-regulates host SERINC3 and SERINC5 thereby excluding these proteins from the viral particles. Virion infectivity is drastically higher when SERINC3 or SERINC5 are excluded from the viral envelope, because these host antiviral proteins impair the membrane fusion event necessary for subsequent virion penetration. In terms of biological role, bypasses host T-cell signaling by inducing a transcriptional program nearly identical to that of anti-CD3 cell activation. Interaction with TCR-zeta chain up-regulates the Fas ligand (FasL). Increasing surface FasL molecules and decreasing surface MHC-I molecules on infected CD4(+) cells send attacking cytotoxic CD8+ T-lymphocytes into apoptosis. Functionally, plays a role in optimizing the host cell environment for viral replication without causing cell death by apoptosis. Protects the infected cells from apoptosis in order to keep them alive until the next virus generation is ready to strike. Inhibits the Fas and TNFR-mediated death signals by blocking MAP3K5/ASK1. Decreases the half-life of TP53, protecting the infected cell against p53-mediated apoptosis. Inhibits the apoptotic signals regulated by the Bcl-2 family proteins through the formation of a Nef/PI3-kinase/PAK2 complex that leads to activation of PAK2 and induces phosphorylation of host BAD. Its function is as follows. Extracellular Nef protein targets CD4(+) T-lymphocytes for apoptosis by interacting with CXCR4 surface receptors. This is Protein Nef from Human immunodeficiency virus type 1 group M subtype B (isolate Lai) (HIV-1).